The primary structure comprises 62 residues: Small EDRK-rich factor 1 (62 aa).

2 stretches are compositionally biased toward basic and acidic residues: residues 1–30 and 50–62; these read MARG…KEDS and IANE…TTEK. The interval 1–62 is disordered; the sequence is MARGNQREIA…EKKSMQTTEK (62 aa).

This sequence belongs to the SERF family. Interacts with SNCA; this interaction promotes the aggregation of SNCA. In terms of tissue distribution, expressed in brain (at protein level). Highly expressed in the testis.

It localises to the cytoplasm. The protein resides in the cytosol. It is found in the nucleus. Functionally, positive regulator of amyloid protein aggregation and proteotoxicity. Induces conformational changes in amyloid proteins, such as APP, HTT, and SNCA, driving them into compact formations preceding the formation of aggregates. In Mus musculus (Mouse), this protein is Small EDRK-rich factor 1 (Serf1).